Reading from the N-terminus, the 436-residue chain is Glutamyl-tRNA reductase (436 aa).

Residues 49–52 (TCNR), Ser-109, 114–116 (EGQ), and Gln-120 each bind substrate. The active-site Nucleophile is the Cys-50. An NADP(+)-binding site is contributed by 198–203 (GAGRMS).

Belongs to the glutamyl-tRNA reductase family. Homodimer.

It catalyses the reaction (S)-4-amino-5-oxopentanoate + tRNA(Glu) + NADP(+) = L-glutamyl-tRNA(Glu) + NADPH + H(+). Its pathway is porphyrin-containing compound metabolism; protoporphyrin-IX biosynthesis; 5-aminolevulinate from L-glutamyl-tRNA(Glu): step 1/2. It participates in porphyrin-containing compound metabolism; chlorophyll biosynthesis. Functionally, catalyzes the NADPH-dependent reduction of glutamyl-tRNA(Glu) to glutamate 1-semialdehyde (GSA). The protein is Glutamyl-tRNA reductase of Prochlorococcus marinus (strain MIT 9312).